Consider the following 100-residue polypeptide: Ribosomal biogenesis factor (100 aa).

Position 19 is a phosphoserine (Ser19). Lys21 carries the N6-acetyllysine modification. Phosphoserine is present on Ser69.

In terms of assembly, associates with the pre-60S ribosomal particles.

The protein resides in the nucleus. Its subcellular location is the nucleolus. Functionally, trans-acting factor in ribosome biogenesis required for efficient 40S and 60S subunit production. The chain is Ribosomal biogenesis factor (RBIS) from Bos taurus (Bovine).